A 344-amino-acid chain; its full sequence is Arginine N-succinyltransferase (344 aa).

Leu125 is a succinyl-CoA binding site. The Proton donor role is filled by His229.

It belongs to the arginine N-succinyltransferase family.

The enzyme catalyses succinyl-CoA + L-arginine = N(2)-succinyl-L-arginine + CoA + H(+). Its pathway is amino-acid degradation; L-arginine degradation via AST pathway; L-glutamate and succinate from L-arginine: step 1/5. Its function is as follows. Catalyzes the transfer of succinyl-CoA to arginine to produce N(2)-succinylarginine. This chain is Arginine N-succinyltransferase, found in Citrobacter koseri (strain ATCC BAA-895 / CDC 4225-83 / SGSC4696).